The sequence spans 183 residues: Putative manganese efflux pump MntP (183 aa).

Helical transmembrane passes span 8–28 (MIAL…VALG), 39–59 (IFYI…VGMA), 68–88 (FGSI…GQMI), 108–128 (LFFA…LGIF), 133–153 (MATI…GLLV), and 162–182 (GSYS…KLLF).

It belongs to the MntP (TC 9.B.29) family.

Its subcellular location is the cell membrane. Probably functions as a manganese efflux pump. The protein is Putative manganese efflux pump MntP of Geobacillus thermodenitrificans (strain NG80-2).